The chain runs to 196 residues: MDDTLFQLKFTAKQLEKLAKKAEKDSKAEQAKVKKALLQKNVECARVYAENAIRKKNEGVNWLRMASRVDAVASKVQTAVTMKGVTKNMAQVTKALDKALSTMDLQKVSSVMDRFEQQVQNLDVHTSVMEDSMSSATTLTTPQEQVDSLIMQIAEENGLEVLDQLSQLPEGASAVGESSVRSQEDQLSRRLAALRN.

M1 bears the N-acetylmethionine mark. The stretch at 5 to 47 forms a coiled coil; the sequence is LFQLKFTAKQLEKLAKKAEKDSKAEQAKVKKALLQKNVECARV. The residue at position 101 (S101) is a Phosphoserine. The stretch at 102-124 forms a coiled coil; sequence TMDLQKVSSVMDRFEQQVQNLDV. S173 is subject to Phosphoserine. The disordered stretch occupies residues 173–196; that stretch reads SAVGESSVRSQEDQLSRRLAALRN. Residues 185 to 195 carry the MIT-interacting motif motif; that stretch reads DQLSRRLAALR.

It belongs to the SNF7 family. Probable peripherally associated component of the endosomal sorting required for transport complex III (ESCRT-III). ESCRT-III components are thought to multimerize to form a flat lattice on the perimeter membrane of the endosome. Several assembly forms of ESCRT-III may exist that interact and act sequentially. Self-associates. Interacts with CHMP1B. Interacts with VPS4A. Interacts with VPS4B. Interacts with PHF1. Interacts with IST1. Interacts with MITD1. In terms of tissue distribution, expressed in placenta, cultured skin fibroblasts and in osteoblast cell line MG-63.

It localises to the cytoplasm. Its subcellular location is the endosome membrane. It is found in the nucleus matrix. Functionally, probable peripherally associated component of the endosomal sorting required for transport complex III (ESCRT-III) which is involved in multivesicular bodies (MVBs) formation and sorting of endosomal cargo proteins into MVBs. MVBs contain intraluminal vesicles (ILVs) that are generated by invagination and scission from the limiting membrane of the endosome and mostly are delivered to lysosomes enabling degradation of membrane proteins, such as stimulated growth factor receptors, lysosomal enzymes and lipids. The MVB pathway appears to require the sequential function of ESCRT-O, -I,-II and -III complexes. ESCRT-III proteins mostly dissociate from the invaginating membrane before the ILV is released. The ESCRT machinery also functions in topologically equivalent membrane fission events, such as the terminal stages of cytokinesis and the budding of enveloped viruses (HIV-1 and other lentiviruses). ESCRT-III proteins are believed to mediate the necessary vesicle extrusion and/or membrane fission activities, possibly in conjunction with the AAA ATPase VPS4. Involved in cytokinesis. Involved in recruiting VPS4A and/or VPS4B to the midbody of dividing cells. May also be involved in chromosome condensation. Targets the Polycomb group (PcG) protein BMI1/PCGF4 to regions of condensed chromatin. May play a role in stable cell cycle progression and in PcG gene silencing. The chain is Charged multivesicular body protein 1a (CHMP1A) from Homo sapiens (Human).